Reading from the N-terminus, the 254-residue chain is 21S rRNA pseudouridine(2819) synthase (254 aa).

D71 is an active-site residue.

This sequence belongs to the pseudouridine synthase RluA family.

The protein resides in the mitochondrion. The enzyme catalyses uridine(2819) in 21S rRNA = pseudouridine(2819) in 21S rRNA. In terms of biological role, pseudouridylate synthase responsible for the pseudouridine-2819 formation in mitochondrial 21S rRNA. May modulate the efficiency or the fidelity of the mitochondrial translation machinery. This chain is 21S rRNA pseudouridine(2819) synthase (PUS5), found in Saccharomyces cerevisiae (strain ATCC 204508 / S288c) (Baker's yeast).